The primary structure comprises 377 residues: Trichodiene synthase (377 aa).

The protein belongs to the trichodiene synthase family.

It catalyses the reaction (2E,6E)-farnesyl diphosphate = trichodiene + diphosphate. Its pathway is sesquiterpene biosynthesis; trichothecene biosynthesis. TS is a member of the terpene cyclase group of enzymes. It catalyzes the isomerization and cyclization of farnesyl pyro-phosphate to form trichodiene, the first cyclic intermediate in the biosynthetic pathway for trichothecenes. It serves to branch trichothecene biosynthesis from the isoprenoid pathway. The protein is Trichodiene synthase (TRI5) of Fusarium poae.